The sequence spans 336 residues: N-((2S)-2-amino-2-carboxyethyl)-L-glutamate dehydrogenase (336 aa).

Lys78 acts as the Proton donor/acceptor in catalysis. The NAD(+) site is built by Arg122 and Lys242.

This sequence belongs to the ornithine cyclodeaminase/mu-crystallin family. In terms of assembly, homodimer.

It carries out the reaction N-[(2S)-2-amino-2-carboxyethyl]-L-glutamate + NAD(+) + H2O = (S)-2,3-diaminopropanoate + 2-oxoglutarate + NADH + H(+). The protein operates within siderophore biosynthesis. Catalyzes the hydrolysis of N-((2S)-2-amino-2-carboxyethyl)-L-glutamate (ACEGA) to form L-2,3-diaminopropionic acid and 2-oxoglutarate. Involved in the biosynthesis of L-2,3-diaminopropionic acid (L-Dap), a precursor of staphyloferrin B and antibiotics. The sequence is that of N-((2S)-2-amino-2-carboxyethyl)-L-glutamate dehydrogenase from Staphylococcus aureus (strain NCTC 8325 / PS 47).